The following is a 239-amino-acid chain: 1-(5-phosphoribosyl)-5-[(5-phosphoribosylamino)methylideneamino] imidazole-4-carboxamide isomerase (239 aa).

Asp-8 serves as the catalytic Proton acceptor. Residue Asp-129 is the Proton donor of the active site.

This sequence belongs to the HisA/HisF family.

It is found in the cytoplasm. It carries out the reaction 1-(5-phospho-beta-D-ribosyl)-5-[(5-phospho-beta-D-ribosylamino)methylideneamino]imidazole-4-carboxamide = 5-[(5-phospho-1-deoxy-D-ribulos-1-ylimino)methylamino]-1-(5-phospho-beta-D-ribosyl)imidazole-4-carboxamide. Its pathway is amino-acid biosynthesis; L-histidine biosynthesis; L-histidine from 5-phospho-alpha-D-ribose 1-diphosphate: step 4/9. The protein is 1-(5-phosphoribosyl)-5-[(5-phosphoribosylamino)methylideneamino] imidazole-4-carboxamide isomerase of Legionella pneumophila subsp. pneumophila (strain Philadelphia 1 / ATCC 33152 / DSM 7513).